The chain runs to 60 residues: MDKKLLAILACPVCKGDLKYDREKQELVCKNDGMAFPIRDGIPVMLEKEARTLTTDERLG.

The protein belongs to the UPF0434 family.

The polypeptide is UPF0434 protein HCH_02705 (Hahella chejuensis (strain KCTC 2396)).